The primary structure comprises 346 residues: tRNA N6-adenosine threonylcarbamoyltransferase (346 aa).

His-111 and His-115 together coordinate Fe cation. Substrate contacts are provided by residues 134–138, Asp-167, Gly-180, and Asn-279; that span reads LVSGG. Asp-307 contributes to the Fe cation binding site.

This sequence belongs to the KAE1 / TsaD family. Fe(2+) is required as a cofactor.

It localises to the cytoplasm. The catalysed reaction is L-threonylcarbamoyladenylate + adenosine(37) in tRNA = N(6)-L-threonylcarbamoyladenosine(37) in tRNA + AMP + H(+). In terms of biological role, required for the formation of a threonylcarbamoyl group on adenosine at position 37 (t(6)A37) in tRNAs that read codons beginning with adenine. Is involved in the transfer of the threonylcarbamoyl moiety of threonylcarbamoyl-AMP (TC-AMP) to the N6 group of A37, together with TsaE and TsaB. TsaD likely plays a direct catalytic role in this reaction. The protein is tRNA N6-adenosine threonylcarbamoyltransferase of Burkholderia cenocepacia (strain HI2424).